The sequence spans 499 residues: MSWIKNVTESPTSLIKKVSCGLIIAASLYAIAPSLSALVFGDSKQSIGKYTTVGLINRGNDCFITSSLQGLAGIPRFVEYLKRIRTVLLELETKLSNNAKGDNPTVDNTTRHSRLENSSNSLAPLHESLTSLILDLISVKDRKTSISPKIVINTLESIFKSKISSKQNDAHEFTLILLQTLQEERSKLIDYSKQICNLNIPKFPFEGETSKFLVCLKCKGLSEPSYKQTFIRELSVPQQTSENLSNILAHDETEIIDDYSCLICQIRAILNHEEYRNFKDCTPDEILMLDRLKNYATKAPINENLPFEVEQYVKRYSKGNLQVSNIKGKVIKKDVVVQLPDILIVHLSRSTFNGITYSRNPCNVKFGERITLSEYTLAESGTITENRQVKYNLKSVVKHTGSHSSGHYMCYRRKTEIRFGKEDESSFRRAPVVNNEVNKNREQNVAHNDYKKSRYKKVKNALRYPYWQISDTAIKESTASTVLNEQKYAYMLYYERVNK.

Positions 53–497 constitute a USP domain; that stretch reads VGLINRGNDC…YAYMLYYERV (445 aa). Catalysis depends on C62, which acts as the Nucleophile. H407 acts as the Proton acceptor in catalysis.

Belongs to the peptidase C19 family.

The enzyme catalyses Thiol-dependent hydrolysis of ester, thioester, amide, peptide and isopeptide bonds formed by the C-terminal Gly of ubiquitin (a 76-residue protein attached to proteins as an intracellular targeting signal).. The chain is Ubiquitin carboxyl-terminal hydrolase 16 (UBP16) from Saccharomyces cerevisiae (strain ATCC 204508 / S288c) (Baker's yeast).